Consider the following 513-residue polypeptide: NAD(P)H-quinone oxidoreductase subunit 2 (513 aa).

The next 14 membrane-spanning stretches (helical) occupy residues 12–32 (TLWP…VDLI), 41–61 (LPYL…PMWI), 77–97 (LSVV…LMSV), 104–124 (SLAT…AMLL), 130–150 (MAMI…LSGY), 165–185 (LLIG…LYGF), 199–219 (IVNL…GICF), 238–258 (PTPV…ALAI), 272–292 (WQTL…VVAI), 300–320 (MLAY…AIGT), 328–348 (ILYI…VVLF), 372–392 (LVLS…GFFG), 394–414 (LYLF…FGLV), and 456–476 (AGML…PPLI). Residues 494–505 (TATPVSRVSTGA) are compositionally biased toward polar residues. Residues 494-513 (TATPVSRVSTGAQAPADHGR) are disordered.

Belongs to the complex I subunit 2 family. In terms of assembly, NDH-1 can be composed of about 15 different subunits; different subcomplexes with different compositions have been identified which probably have different functions.

The protein localises to the cell inner membrane. The catalysed reaction is a plastoquinone + NADH + (n+1) H(+)(in) = a plastoquinol + NAD(+) + n H(+)(out). It catalyses the reaction a plastoquinone + NADPH + (n+1) H(+)(in) = a plastoquinol + NADP(+) + n H(+)(out). Functionally, NDH-1 shuttles electrons from an unknown electron donor, via FMN and iron-sulfur (Fe-S) centers, to quinones in the respiratory and/or the photosynthetic chain. The immediate electron acceptor for the enzyme in this species is believed to be plastoquinone. Couples the redox reaction to proton translocation, and thus conserves the redox energy in a proton gradient. Cyanobacterial NDH-1 also plays a role in inorganic carbon-concentration. The polypeptide is NAD(P)H-quinone oxidoreductase subunit 2 (Gloeobacter violaceus (strain ATCC 29082 / PCC 7421)).